A 701-amino-acid polypeptide reads, in one-letter code: T-cell immunomodulatory protein homolog (701 aa).

The N-terminal stretch at 1-29 (MVKCGKYVLILELLLLTLLYNLIKRVSNS) is a signal peptide. The Extracellular portion of the chain corresponds to 30–657 (GETVSSFVDG…IQLSVNPSNK (628 aa)). Asparagine 148, asparagine 180, asparagine 217, asparagine 258, asparagine 458, asparagine 522, and asparagine 571 each carry an N-linked (GlcNAc...) asparagine glycan. The helical transmembrane segment at 658–678 (FYSIIYITLICLSVIGVLIFI) threads the bilayer. Residues 679–701 (LDRKEKIEDSKEEMGFKSHFVIG) are Cytoplasmic-facing.

Belongs to the TIP family.

The protein localises to the membrane. In terms of biological role, may protect the parasite against attack by the host immune system by immunomodulation. This Plasmodium yoelii yoelii protein is T-cell immunomodulatory protein homolog.